A 312-amino-acid chain; its full sequence is Olfactory receptor 6C75 (312 aa).

At 1–23 the chain is on the extracellular side; the sequence is MRNSTAVTDFILLGLTSDPQWQV. N3 is a glycosylation site (N-linked (GlcNAc...) asparagine). The chain crosses the membrane as a helical span at residues 24-44; that stretch reads VLFIFLLVTYMLSVTGNLIII. Residues 45-63 lie on the Cytoplasmic side of the membrane; that stretch reads TLTLSDPHLQTPMYFFLRN. The helical transmembrane segment at 64–84 threads the bilayer; it reads FSFLEISFTSVCIPRFLVTVV. Residues 85–95 lie on the Extracellular side of the membrane; the sequence is TGNRTISYNGC. A disulfide bridge links C95 with C177. A helical membrane pass occupies residues 96-116; that stretch reads VAQLFFFIFLGVTEFYLLAAM. Over 117 to 140 the chain is Cytoplasmic; it reads SYDRCMAICKPLHYTIIMSTRVCT. The chain crosses the membrane as a helical span at residues 141-161; it reads LLVFSSWLAGFLIIFPPVMLL. At 162-194 the chain is on the extracellular side; sequence LQLDFCASNVIDHFICDSSPMLQLSCTNTHFLE. Residues 195–215 traverse the membrane as a helical segment; the sequence is LMAFFLAVVTLMVTLTLVILS. The Cytoplasmic portion of the chain corresponds to 216–237; sequence YTNIIRTILKIPSMSQRKKAFS. A helical transmembrane segment spans residues 238–258; it reads TCSSHMIVVSISYSSCIFMYI. Over 259 to 269 the chain is Extracellular; it reads KTSARERVTLS. Residues 270 to 290 form a helical membrane-spanning segment; the sequence is KGVAVLNTSVAPLLNPFIYTL. At 291–312 the chain is on the cytoplasmic side; sequence RNKQVKQAFKSMVQKMIFSLNK.

Belongs to the G-protein coupled receptor 1 family.

It localises to the cell membrane. Odorant receptor. In Homo sapiens (Human), this protein is Olfactory receptor 6C75 (OR6C75).